The following is a 147-amino-acid chain: Angiogenin (147 aa).

Residues 1-24 form the signal peptide; it reads MVMGLGVLLLVFVLGLGLTPPTLA. Residue Gln25 is modified to Pyrrolidone carboxylic acid. His37 serves as the catalytic Proton acceptor. Residues Arg45 and Asp46 each coordinate tRNA. 3 disulfides stabilise this stretch: Cys50–Cys105, Cys63–Cys116, and Cys81–Cys131. A Nucleolar localization signal motif is present at residues 55-59; the sequence is RRRGL. TRNA-binding residues include Cys105 and Val127. The Proton donor role is filled by His138.

This sequence belongs to the pancreatic ribonuclease family. In terms of assembly, homodimer. Interacts with RNH1; inhibiting ANG ribonuclease activity. Interacts with PCNA.

It is found in the secreted. It localises to the nucleus. Its subcellular location is the nucleolus. The protein localises to the cytoplasm. The protein resides in the stress granule. Has weak tRNA ribonuclease activity by itself due to partial autoinhibition by its C-terminus, which folds into a short alpha-helix that partially occludes the substrate-binding site. In absence of stress, the ribonuclease activity is inhibited by RNH1 in the cytoplasm. In response to stress, dissociates from RNH1 in the cytoplasm and associates with cytoplasmic ribosomes with vacant A-sites: ribosomes directly activate the tRNA ribonuclease activity of ANG by refolding the C-terminal alpha-helix. In response to stress, the angiogenic activity of ANG is inhibited by RNH1 in the nucleus. Secreted ribonuclease that can either promote or restrict cell proliferation of target cells, depending on the context. Endocytosed in target cells via its receptor PLXNB2 and translocates to the cytoplasm or nucleus. Under stress conditions, localizes to the cytoplasm and promotes the assembly of stress granules (SGs): specifically cleaves a subset of tRNAs within anticodon loops to produce tRNA-derived stress-induced fragments (tiRNAs), resulting in translation repression and inhibition of cell proliferation. tiRNas also prevent formation of apoptosome, thereby promoting cell survival. Preferentially cleaves RNAs between a pyrimidine and an adenosine residue, suggesting that it cleaves the anticodon loop of tRNA(Ala) (32-UUAGCAU-38) after positions 33 and 36. Cleaves a subset of tRNAs, including tRNA(Ala), tRNA(Glu), tRNA(Gly), tRNA(Lys), tRNA(Val), tRNA(His), tRNA(Asp) and tRNA(Sec). Under growth conditions and in differentiated cells, translocates to the nucleus and stimulates ribosomal RNA (rRNA) transcription, including that containing the initiation site sequences of 45S rRNA, thereby promoting cell growth and proliferation. Angiogenin induces vascularization of normal and malignant tissues via its ability to promote rRNA transcription. Involved in hematopoietic stem and progenitor cell (HSPC) growth and survival by promoting rRNA transcription in growth conditions and inhibiting translation in response to stress, respectively. Mediates the crosstalk between myeloid and intestinal epithelial cells to protect the intestinal epithelial barrier integrity: secreted by myeloid cells and promotes intestinal epithelial cells proliferation and survival. Also mediates osteoclast-endothelial cell crosstalk in growing bone: produced by osteoclasts and protects the neighboring vascular cells against senescence by promoting rRNA transcription. This chain is Angiogenin (ANG), found in Gorilla gorilla gorilla (Western lowland gorilla).